Reading from the N-terminus, the 894-residue chain is B-cell lymphoma/leukemia 11B (894 aa).

Phosphoserine is present on residues serine 97 and serine 110. Phosphothreonine is present on threonine 120. At serine 129 the chain carries Phosphoserine. Residue lysine 137 forms a Glycyl lysine isopeptide (Lys-Gly) (interchain with G-Cter in SUMO2) linkage. The C2H2-type 1 zinc-finger motif lies at 221–251 (YICTTCKQPFNSAWFLLQHAQNTHGFRIYLE). Serine 256 carries the phosphoserine modification. The residue at position 260 (threonine 260) is a Phosphothreonine. A Phosphoserine modification is found at serine 277. Omega-N-methylarginine is present on arginine 293. An Asymmetric dimethylarginine modification is found at arginine 322. Serine 358 carries the post-translational modification Phosphoserine. Disordered regions lie at residues 370–428 (LAGN…KSKS) and 471–583 (KRHM…GGGA). Threonine 376 carries the post-translational modification Phosphothreonine. A phosphoserine mark is found at serine 381, serine 398, and serine 401. The span at 396–423 (QPSPKSPFLSTPPLPPMPPGGTPPPQPP) shows a compositional bias: pro residues. A phosphothreonine mark is found at threonine 406 and threonine 417. 2 C2H2-type zinc fingers span residues 427 to 454 (KSCEFCGKTFKFQSNLIVHRRSHTGEKP) and 455 to 482 (YKCQLCDHACSQASKLKRHMKTHMHKAG). The span at 471–480 (KRHMKTHMHK) shows a compositional bias: basic residues. Serine 483, serine 488, serine 496, and serine 497 each carry phosphoserine. A compositionally biased stretch (basic and acidic residues) spans 511–529 (KAADGDFRHHESDPSLGHE). The span at 530–546 (PEEEDEEEEEEEEELLL) shows a compositional bias: acidic residues. The segment covering 568 to 583 (NGGGGVPGVPGAGGGA) has biased composition (gly residues). Residues lysine 591 and lysine 617 each participate in a glycyl lysine isopeptide (Lys-Gly) (interchain with G-Cter in SUMO2) cross-link. The interval 653–680 (GRGGGFAPGTEPFPGLFPRKPAPLPSPG) is disordered. Position 678 is a phosphoserine (serine 678). Residues lysine 686 and lysine 723 each participate in a glycyl lysine isopeptide (Lys-Gly) (interchain with G-Cter in SUMO2) cross-link. Positions 737–752 (FATSSEHSSENGSLRF) are enriched in polar residues. A disordered region spans residues 737–794 (FATSSEHSSENGSLRFSTPPGDLLDGGLSGRSGTASGGSTPHLGGPGPGRPSSKEGRR). The span at 753–775 (STPPGDLLDGGLSGRSGTASGGS) shows a compositional bias: low complexity. At threonine 754 the chain carries Phosphothreonine. Phosphoserine is present on residues serine 765 and serine 772. 3 consecutive C2H2-type zinc fingers follow at residues 796 to 823 (DTCEYCGKVFKNCSNLTVHRRSHTGERP), 824 to 853 (YKCELCNYACAQSSKLTRHMKTHGQIGKEV), and 854 to 884 (YRCDICQMPFSVYSTLEKHMKKWHGEHLLTN). Residue lysine 851 is modified to N6-acetyllysine. Lysine 887 participates in a covalent cross-link: Glycyl lysine isopeptide (Lys-Gly) (interchain with G-Cter in SUMO2).

Interacts with TFCOUP1, SIRT1, ARP1 and EAR2. Interacts with EP300; the interaction is detected in activated T-lymphocytes, but not under resting conditions. Sumoylated with SUMO1. Highly expressed in brain and in malignant T-cell lines derived from patients with adult T-cell leukemia/lymphoma.

The protein localises to the nucleus. Key regulator of both differentiation and survival of T-lymphocytes during thymocyte development in mammals. Essential in controlling the responsiveness of hematopoietic stem cells to chemotactic signals by modulating the expression of the receptors CCR7 and CCR9, which direct the movement of progenitor cells from the bone marrow to the thymus. Is a regulator of IL2 promoter and enhances IL2 expression in activated CD4(+) T-lymphocytes. Tumor-suppressor that represses transcription through direct, TFCOUP2-independent binding to a GC-rich response element. May also function in the P53-signaling pathway. The polypeptide is B-cell lymphoma/leukemia 11B (BCL11B) (Homo sapiens (Human)).